The sequence spans 159 residues: ATP synthase subunit b 1 (159 aa).

A helical transmembrane segment spans residues phenylalanine 5–alanine 25.

Belongs to the ATPase B chain family. As to quaternary structure, F-type ATPases have 2 components, F(1) - the catalytic core - and F(0) - the membrane proton channel. F(1) has five subunits: alpha(3), beta(3), gamma(1), delta(1), epsilon(1). F(0) has three main subunits: a(1), b(2) and c(10-14). The alpha and beta chains form an alternating ring which encloses part of the gamma chain. F(1) is attached to F(0) by a central stalk formed by the gamma and epsilon chains, while a peripheral stalk is formed by the delta and b chains.

It localises to the cell inner membrane. Its function is as follows. F(1)F(0) ATP synthase produces ATP from ADP in the presence of a proton or sodium gradient. F-type ATPases consist of two structural domains, F(1) containing the extramembraneous catalytic core and F(0) containing the membrane proton channel, linked together by a central stalk and a peripheral stalk. During catalysis, ATP synthesis in the catalytic domain of F(1) is coupled via a rotary mechanism of the central stalk subunits to proton translocation. In terms of biological role, component of the F(0) channel, it forms part of the peripheral stalk, linking F(1) to F(0). This is ATP synthase subunit b 1 from Bartonella bacilliformis (strain ATCC 35685 / KC583 / Herrer 020/F12,63).